A 371-amino-acid chain; its full sequence is Opine oxidase subunit B (371 aa).

Heterodimer of a subunit A and a subunit B.

Its pathway is opine metabolism; octopine degradation. Its function is as follows. Oxidative cleavage of octopine into L-arginine and pyruvate. In Agrobacterium tumefaciens (strain Ach5), this protein is Opine oxidase subunit B (ooxB).